The primary structure comprises 147 residues: Austinoid biosynthesis cluster protein H (147 aa).

It belongs to the trt14 isomerase family. As to quaternary structure, homodimer.

It functions in the pathway secondary metabolite biosynthesis; terpenoid biosynthesis. Part of the gene cluster that mediates the biosynthesis of calidodehydroaustin, a fungal meroterpenoid. The first step of the pathway is the synthesis of 3,5-dimethylorsellinic acid by the polyketide synthase ausA. 3,5-dimethylorsellinic acid is then prenylated by the polyprenyl transferase ausN. Further epoxidation by the FAD-dependent monooxygenase ausM and cyclization by the probable terpene cyclase ausL lead to the formation of protoaustinoid A. Protoaustinoid A is then oxidized to spiro-lactone preaustinoid A3 by the combined action of the FAD-binding monooxygenases ausB and ausC, and the dioxygenase ausE. Acid-catalyzed keto-rearrangement and ring contraction of the tetraketide portion of preaustinoid A3 by ausJ lead to the formation of preaustinoid A4. The aldo-keto reductase ausK, with the help of ausH, is involved in the next step by transforming preaustinoid A4 into isoaustinone which is in turn hydroxylated by the P450 monooxygenase ausI to form austinolide. The cytochrome P450 monooxygenase ausG modifies austinolide to austinol. Austinol is further acetylated to austin by the O-acetyltransferase ausP, which spontaneously changes to dehydroaustin. The cytochrome P450 monooxygenase ausR then converts dehydroaustin is into 7-dehydrodehydroaustin. The hydroxylation catalyzed by ausR permits the O-acetyltransferase ausQ to add an additional acetyl group to the molecule, leading to the formation of acetoxydehydroaustin. The short chain dehydrogenase ausT catalyzes the reduction of the double bond present between carbon atoms 1 and 2 to convert 7-dehydrodehydroaustin into 1,2-dihydro-7-hydroxydehydroaustin. AusQ catalyzes not only an acetylation reaction but also the addition of the PKS ausV diketide product to 1,2-dihydro-7-hydroxydehydroaustin, forming precalidodehydroaustin. Finally, the iron/alpha-ketoglutarate-dependent dioxygenase converts precalidodehydroaustin into calidodehydroaustin. This Aspergillus calidoustus protein is Austinoid biosynthesis cluster protein H.